We begin with the raw amino-acid sequence, 717 residues long: Copine family protein 5 (717 aa).

The C2 domain occupies 193–318; sequence YLGGIIVSAE…KYGPGSDNVY (126 aa). The VWFA domain maps to 377-567; it reads ELDQRRFDGE…LNKSRIAETA (191 aa).

The protein belongs to the copine family.

This Caenorhabditis elegans protein is Copine family protein 5 (cpna-5).